A 510-amino-acid chain; its full sequence is Probable malate:quinone oxidoreductase (510 aa).

This sequence belongs to the MQO family. It depends on FAD as a cofactor.

It carries out the reaction (S)-malate + a quinone = a quinol + oxaloacetate. The protein operates within carbohydrate metabolism; tricarboxylic acid cycle; oxaloacetate from (S)-malate (quinone route): step 1/1. The protein is Probable malate:quinone oxidoreductase of Wigglesworthia glossinidia brevipalpis.